The sequence spans 159 residues: uncharacterized protein (159 aa).

His44, His124, and His128 together coordinate a divalent metal cation.

Belongs to the DinB family.

This is an uncharacterized protein from Bacillus subtilis (strain 168).